The chain runs to 382 residues: Mannitol-1-phosphate 5-dehydrogenase (382 aa).

Ala3 to Gly14 provides a ligand contact to NAD(+).

This sequence belongs to the mannitol dehydrogenase family.

It catalyses the reaction D-mannitol 1-phosphate + NAD(+) = beta-D-fructose 6-phosphate + NADH + H(+). The chain is Mannitol-1-phosphate 5-dehydrogenase from Psychromonas ingrahamii (strain DSM 17664 / CCUG 51855 / 37).